Reading from the N-terminus, the 464-residue chain is Asparagine--tRNA ligase (464 aa).

This sequence belongs to the class-II aminoacyl-tRNA synthetase family. As to quaternary structure, homodimer.

It is found in the cytoplasm. It carries out the reaction tRNA(Asn) + L-asparagine + ATP = L-asparaginyl-tRNA(Asn) + AMP + diphosphate + H(+). The protein is Asparagine--tRNA ligase of Clostridium botulinum (strain Eklund 17B / Type B).